A 347-amino-acid polypeptide reads, in one-letter code: NADH-ubiquinone oxidoreductase chain 2 (347 aa).

11 consecutive transmembrane segments (helical) span residues 3 to 23 (PLIF…VMMS), 25 to 45 (HWLM…PLLM), 59 to 79 (YFLT…INLL), 96 to 116 (IIMT…FWVP), 122 to 144 (ISLS…VLYV), 149 to 171 (INLD…GGLN), 178 to 198 (ILAY…VFNP), 202 to 222 (LLNL…FMVA), 247 to 267 (IMLS…WMII), 276 to 296 (ITLA…YMRL), and 326 to 346 (LPVL…ITLL).

The protein belongs to the complex I subunit 2 family. In terms of assembly, core subunit of respiratory chain NADH dehydrogenase (Complex I) which is composed of 45 different subunits. Interacts with TMEM242.

The protein localises to the mitochondrion inner membrane. It catalyses the reaction a ubiquinone + NADH + 5 H(+)(in) = a ubiquinol + NAD(+) + 4 H(+)(out). In terms of biological role, core subunit of the mitochondrial membrane respiratory chain NADH dehydrogenase (Complex I) which catalyzes electron transfer from NADH through the respiratory chain, using ubiquinone as an electron acceptor. Essential for the catalytic activity and assembly of complex I. This is NADH-ubiquinone oxidoreductase chain 2 from Saccopteryx bilineata (Greater white-lined bat).